We begin with the raw amino-acid sequence, 1191 residues long: uncharacterized protein (1191 aa).

WD repeat units follow at residues 558 to 588 (GHRD…HLWT), 599 to 629 (GHTG…KIWD), 640 to 670 (GHQD…RLWH), 682 to 712 (GHTK…RLWD), 723 to 753 (LPEV…RLWT), 764 to 794 (GHDE…IHWS), 805 to 835 (GYPE…KVWD), 995 to 1025 (QRKE…TLWN), 1036 to 1066 (AHGD…KIWS), 1077 to 1107 (SDPL…RLWD), and 1118 to 1148 (STSG…QSWP).

This is an uncharacterized protein from Synechocystis sp. (strain ATCC 27184 / PCC 6803 / Kazusa).